We begin with the raw amino-acid sequence, 178 residues long: ATP synthase subunit delta (178 aa).

The protein belongs to the ATPase delta chain family. In terms of assembly, F-type ATPases have 2 components, F(1) - the catalytic core - and F(0) - the membrane proton channel. F(1) has five subunits: alpha(3), beta(3), gamma(1), delta(1), epsilon(1). F(0) has three main subunits: a(1), b(2) and c(10-14). The alpha and beta chains form an alternating ring which encloses part of the gamma chain. F(1) is attached to F(0) by a central stalk formed by the gamma and epsilon chains, while a peripheral stalk is formed by the delta and b chains.

It localises to the cell inner membrane. Functionally, f(1)F(0) ATP synthase produces ATP from ADP in the presence of a proton or sodium gradient. F-type ATPases consist of two structural domains, F(1) containing the extramembraneous catalytic core and F(0) containing the membrane proton channel, linked together by a central stalk and a peripheral stalk. During catalysis, ATP synthesis in the catalytic domain of F(1) is coupled via a rotary mechanism of the central stalk subunits to proton translocation. Its function is as follows. This protein is part of the stalk that links CF(0) to CF(1). It either transmits conformational changes from CF(0) to CF(1) or is implicated in proton conduction. In Pseudomonas fluorescens (strain ATCC BAA-477 / NRRL B-23932 / Pf-5), this protein is ATP synthase subunit delta.